Reading from the N-terminus, the 572-residue chain is MDHLHSSTAELNLLWGSLILEELTRHGVMHLCMAPGSRSTPLTLAAAAQDKLTRHLHFDERGLGFLALGLAKASQAPVAIITTSGTAVANLYPAIVEASLTHVPLIILSGDRPWELIGCGANQAIEQLGIFGGYARQLNLPTPDLRIGPEVLLSALDEQLANLDRPLHINCMYPEPLYPSEHRFDQFDSYLSRLGQWQDTQVPYLSVANASLSAFPPRDAMMRFVHGKGVIVAGTLTEAETPTELITLSQKLGWPLLTDAQSQLRQHPGAIGHIDQLLLNPRARALLDQAERVLVFGGRLLSKRLISYLAEKDWHSYWQVLPHQERLDPSHSNKQLWLGRAGDVCALEWPRSSEANWAASLISLNQSVEQDFIHHIDGGEFGEAQVIRAIAASHTAEQQLFIGNSLPVRLYDMFAPIGCCAASTYTNRGASGIDGLIATACGVARHSGRPTTLILGDLSALHDLNSLALARDCQSPLVIVVLNNDGGNIFNLLPVPTEELRSDFYRLSHGLEFGYGAAMFGLPYDRAEDMEAFIDAYQAALEHPGASVIEVTVAQDQASNQIRRMAEWIRSR.

It belongs to the TPP enzyme family. MenD subfamily. Homodimer. Mg(2+) is required as a cofactor. Requires Mn(2+) as cofactor. It depends on thiamine diphosphate as a cofactor.

It carries out the reaction isochorismate + 2-oxoglutarate + H(+) = 5-enolpyruvoyl-6-hydroxy-2-succinyl-cyclohex-3-ene-1-carboxylate + CO2. Its pathway is quinol/quinone metabolism; 1,4-dihydroxy-2-naphthoate biosynthesis; 1,4-dihydroxy-2-naphthoate from chorismate: step 2/7. The protein operates within quinol/quinone metabolism; menaquinone biosynthesis. Its function is as follows. Catalyzes the thiamine diphosphate-dependent decarboxylation of 2-oxoglutarate and the subsequent addition of the resulting succinic semialdehyde-thiamine pyrophosphate anion to isochorismate to yield 2-succinyl-5-enolpyruvyl-6-hydroxy-3-cyclohexene-1-carboxylate (SEPHCHC). In Shewanella amazonensis (strain ATCC BAA-1098 / SB2B), this protein is 2-succinyl-5-enolpyruvyl-6-hydroxy-3-cyclohexene-1-carboxylate synthase.